The chain runs to 526 residues: Major facilitator superfamily domain-containing protein 4A (526 aa).

A run of 12 helical transmembrane segments spans residues 21–41 (LTYWSVFFSFGLCVAFLGPTI), 55–75 (ITLVFFSQQFFLFLGSTIGGF), 84–104 (LSSLAVSTLIISVVFAIIPLC), 107–127 (LLMLAFAMAVSGLAMGTIDTI), 142–162 (VFLQALHFFVGLGALVSPLIA), 215–235 (YAFWIMAIINLPVPIAIFVLV), 297–317 (LSFFGIHVLGGLVLFFSDGIV), 341–361 (GYLTCIFWAAITTGRLSAIPL), 377–397 (GVIVTVLLLLIFSNSSVFLFI), 401–421 (CLGLFISSIFPCMLALTEDIL), 430–450 (VLVTSAGMGEMVLQVLVGSVM), and 458–478 (FLLCGMIFGCLGFTFFTFLYF).

Belongs to the major facilitator superfamily.

The protein localises to the membrane. This is Major facilitator superfamily domain-containing protein 4A (mfsd4a) from Danio rerio (Zebrafish).